Here is a 349-residue protein sequence, read N- to C-terminus: MRSVSPQSTMARIPERRVRTLDFAQFRHGEPSGSRGFCRELVDCLSSVGFVKIRNHGISGQEIENVFVMSQLFFSLPQAAKGKAAHPPEANPHRGYSYVGQEKLSRVKDYEKGKREITDVYDIKHYPIDRDARQESYDQGAAVDNLYPNRWPDEQDIPGFRVLMETFYERCHEVHQDILRAIAIGFDLSPSFLTDLCCQNTSELRLNHYPSVHPSSLRKGAKRISEHTDFGTVTLLFQDSVGGLEIEDQNTPGTYFPVLSERKSDIIVNIGDCIQRWTNDKIHSTSHRVVLPEDTDALTKDRYSVAYFGKPSRSQLVGSLREFVKEGEKPKYNDISAWQYNQEKLVLTY.

Residues 200–311 (NTSELRLNHY…RYSVAYFGKP (112 aa)) form the Fe2OG dioxygenase domain. Residues His227, Asp229, and His287 each contribute to the Fe cation site. Arg302 is a binding site for 2-oxoglutarate.

Belongs to the iron/ascorbate-dependent oxidoreductase family. The cofactor is Fe(2+).

It catalyses the reaction L-proline + 2-oxoglutarate + O2 = trans-4-hydroxy-L-proline + succinate + CO2. The catalysed reaction is L-proline + 2-oxoglutarate + O2 = trans-3-hydroxy-L-proline + succinate + CO2. The enzyme catalyses D-proline + 2-oxoglutarate + O2 = cis-4-hydroxy-D-proline + succinate + CO2. The protein operates within secondary metabolite biosynthesis. 2-oxoglutarate-Fe(II) type oxidoreductase; part of the gene cluster that mediates the biosynthesis of pyrrolopyrazines, secondary metabolites showing insecticidal activity. Within the pathway, ppzD converts L-proline into trans-4-hydroxy-L-proline as a major product, yielding a key precursor for peramine biosynthesis. PpzD is also able to convert L-proline into trans-3-hydroxy-L-proline. The single multifunctional NRPS ppzA is sufficient to produce peramine via condensation of 1-pyrroline-5-carboxylate and arginine, N-methylation of the alpha-amino group of arginine and reduction of the thioester and the cyclization to form an iminium ion resulting in release from the peptide synthetase. Deprotonation of this intermediate and oxidation of the pyrroline ring would give rise to peramine. In Epichloe species that produce only peramine, the peramine synthetase gene is not localized in a gene cluster, in contrast to Metarhizium species that contain additional pyrrolopyrazine biosynthesis genes. The 2-oxoglutarate-Fe(II) type oxidoreductase ppzC hydroxylates peramine to yield the newly identified compound 8-hydroxyperamine whereas ppzD converts L-proline into trans-4-hydroxy-L-proline, a precursor of peramine biosynthesis. The chain is 2-oxoglutarate-Fe(II) type oxidoreductase ppzD (ppzD) from Metarhizium majus (strain ARSEF 297).